Reading from the N-terminus, the 97-residue chain is UPF0416 protein RC0826 (97 aa).

The signal sequence occupies residues 1–33 (MRIFVKAAISTAAWRFYAHPTVAMGICVGTALA).

This sequence belongs to the UPF0416 family.

In Rickettsia conorii (strain ATCC VR-613 / Malish 7), this protein is UPF0416 protein RC0826.